Here is a 274-residue protein sequence, read N- to C-terminus: Dehydration-responsive element-binding protein 2A (274 aa).

Basic and acidic residues-rich tracts occupy residues 1–10 (MERGEGRRGD) and 35–50 (KWWK…ENSS). Positions 1–75 (MERGEGRRGD…KGGPENSNCA (75 aa)) are disordered. The segment at residues 75 to 132 (AYRGVRQRTWGKWVAEIREPNRGRRLWLGSFPTALEAAHAYDEAARAMYGPTARVNFA) is a DNA-binding region (AP2/ERF).

The protein belongs to the AP2/ERF transcription factor family. ERF subfamily.

The protein resides in the nucleus. Functionally, transcriptional activator that binds specifically to the DNA sequence 5'-[AG]CCGAC-3'. Binding to the C-repeat/DRE element mediates high salinity- and dehydration-inducible transcription. The sequence is that of Dehydration-responsive element-binding protein 2A (DREB2A) from Oryza sativa subsp. indica (Rice).